The primary structure comprises 150 residues: Globin-2 (150 aa).

In terms of domain architecture, Globin spans 11–150 (PLSDAEKNKI…MICILLSSAY (140 aa)). Heme b is bound by residues His74 and His106.

It belongs to the globin family. In terms of assembly, monomer.

The sequence is that of Globin-2 from Mordacia mordax (Southern hemisphere lamprey).